The primary structure comprises 102 residues: Small ribosomal subunit protein uS10 (102 aa).

This sequence belongs to the universal ribosomal protein uS10 family. Part of the 30S ribosomal subunit.

Involved in the binding of tRNA to the ribosomes. In Streptococcus thermophilus (strain CNRZ 1066), this protein is Small ribosomal subunit protein uS10.